A 324-amino-acid polypeptide reads, in one-letter code: Acetyl-coenzyme A carboxylase carboxyl transferase subunit alpha (324 aa).

Positions 42-296 (RLSELEEEVY…EKALTRLAEK (255 aa)) constitute a CoA carboxyltransferase C-terminal domain.

This sequence belongs to the AccA family. In terms of assembly, acetyl-CoA carboxylase is a heterohexamer composed of biotin carboxyl carrier protein (AccB), biotin carboxylase (AccC) and two subunits each of ACCase subunit alpha (AccA) and ACCase subunit beta (AccD).

The protein resides in the cytoplasm. It catalyses the reaction N(6)-carboxybiotinyl-L-lysyl-[protein] + acetyl-CoA = N(6)-biotinyl-L-lysyl-[protein] + malonyl-CoA. It functions in the pathway lipid metabolism; malonyl-CoA biosynthesis; malonyl-CoA from acetyl-CoA: step 1/1. Its function is as follows. Component of the acetyl coenzyme A carboxylase (ACC) complex. First, biotin carboxylase catalyzes the carboxylation of biotin on its carrier protein (BCCP) and then the CO(2) group is transferred by the carboxyltransferase to acetyl-CoA to form malonyl-CoA. The protein is Acetyl-coenzyme A carboxylase carboxyl transferase subunit alpha of Shouchella clausii (strain KSM-K16) (Alkalihalobacillus clausii).